A 509-amino-acid chain; its full sequence is Maturase K (509 aa).

This sequence belongs to the intron maturase 2 family. MatK subfamily.

It localises to the plastid. The protein localises to the chloroplast. Functionally, usually encoded in the trnK tRNA gene intron. Probably assists in splicing its own and other chloroplast group II introns. The chain is Maturase K from Abies firma (Momi fir).